A 342-amino-acid polypeptide reads, in one-letter code: tRNA N6-adenosine threonylcarbamoyltransferase (342 aa).

Positions 111 and 115 each coordinate Fe cation. Substrate is bound by residues 133 to 137, Asp-166, Gly-179, Asp-183, and Asn-272; that span reads AVSGG. Asp-300 serves as a coordination point for Fe cation.

This sequence belongs to the KAE1 / TsaD family. It depends on Fe(2+) as a cofactor.

The protein resides in the cytoplasm. The catalysed reaction is L-threonylcarbamoyladenylate + adenosine(37) in tRNA = N(6)-L-threonylcarbamoyladenosine(37) in tRNA + AMP + H(+). Required for the formation of a threonylcarbamoyl group on adenosine at position 37 (t(6)A37) in tRNAs that read codons beginning with adenine. Is involved in the transfer of the threonylcarbamoyl moiety of threonylcarbamoyl-AMP (TC-AMP) to the N6 group of A37, together with TsaE and TsaB. TsaD likely plays a direct catalytic role in this reaction. The sequence is that of tRNA N6-adenosine threonylcarbamoyltransferase from Geobacter sp. (strain M21).